The following is a 307-amino-acid chain: Ninja-family protein 5 (307 aa).

Disordered regions lie at residues 1 to 159 and 173 to 208; these read MASR…EHTV and TAGS…EPQP. Gly residues predominate over residues 8–30; it reads GGFGRDGGQAPVGGAGAAPGPGG. Polar residues-rich tracts occupy residues 63–83 and 173–183; these read QRSS…GTSC and TAGSPTPSRPQ.

It belongs to the Ninja family.

The protein resides in the nucleus. This is Ninja-family protein 5 from Zea mays (Maize).